Reading from the N-terminus, the 152-residue chain is CASP-like protein 5C1 (152 aa).

Topologically, residues 1-12 (MVRTTASFGTSS) are cytoplasmic. A helical membrane pass occupies residues 13 to 33 (SFVLRLGQTLFSSASLLFMCF). Residues 34–44 (NDDEDFYAYTT) lie on the Extracellular side of the membrane. The chain crosses the membrane as a helical span at residues 45–65 (FCYLVTVMGLVTPWSVTLALM). Residues 66 to 80 (EAYSILVKKLPMQAT) lie on the Cytoplasmic side of the membrane. The helical transmembrane segment at 81-101 (VISVIVAGDFVLSFLSLGGAC) threads the bilayer. Residues 102–126 (STASVAVLLMDAGEKQCDRYKLSAT) lie on the Extracellular side of the membrane. A helical transmembrane segment spans residues 127–147 (MAFLSSFLSFASTFFNFCLLP). Residues 148-152 (SLMSH) are Cytoplasmic-facing.

The protein belongs to the Casparian strip membrane proteins (CASP) family. In terms of assembly, homodimer and heterodimers.

It is found in the cell membrane. The chain is CASP-like protein 5C1 from Arabidopsis thaliana (Mouse-ear cress).